The primary structure comprises 383 residues: Agmatine deiminase (383 aa).

Residues Asp220 and Asp226 each contribute to the agmatine site. Catalysis depends on Cys366, which acts as the Amidino-cysteine intermediate.

It belongs to the agmatine deiminase family. In terms of assembly, forms homodimers.

The catalysed reaction is agmatine + H2O = N-carbamoylputrescine + NH4(+). It functions in the pathway amine and polyamine biosynthesis; putrescine biosynthesis via agmatine pathway; N-carbamoylputrescine from agmatine: step 1/1. Its activity is regulated as follows. Inhibited by N-ethylmaleimide and iodoacetamide. In terms of biological role, mediates the hydrolysis of agmatine into N-carbamoylputrescine in the arginine decarboxylase (ADC) pathway of putrescine biosynthesis, a basic polyamine. This chain is Agmatine deiminase (AIH), found in Arabidopsis thaliana (Mouse-ear cress).